Reading from the N-terminus, the 225-residue chain is Respiratory nitrate reductase 1 gamma chain (225 aa).

N-formylmethionine is present on methionine 1. The Periplasmic segment spans residues 1-3; that stretch reads MQF. Residues 4–29 traverse the membrane as a helical segment; it reads LNMFFFDIYPYIAGAVFLIGSWLRYD. The Cytoplasmic portion of the chain corresponds to 30–47; that stretch reads YGQYTWRAASSQMLDRKG. Residues 48–70 traverse the membrane as a helical segment; it reads MNLASNLFHIGILGIFVGHFFGM. The heme b site is built by histidine 56 and histidine 66. Topologically, residues 71 to 82 are periplasmic; sequence LTPHWMYEAWLP. Residues 83 to 112 form a helical membrane-spanning segment; that stretch reads IEVKQKMAMFAGGASGVLCLIGGVLLLKRR. The Cytoplasmic segment spans residues 113-124; it reads LFSPRVRATTTG. The chain crosses the membrane as a helical span at residues 125–148; that stretch reads ADILILSLLVIQCALGLLTIPFSA. Over 149–182 the chain is Periplasmic; that stretch reads QHMDGSEMMKLVGWAQSVVTFHGGASQHLDGVAF. A helical membrane pass occupies residues 183–198; the sequence is IFRLHLVLGMTLFLLF. Histidine 187 and histidine 205 together coordinate heme b. Over 199–225 the chain is Cytoplasmic; it reads PFSRLIHIWSVPVEYLTRKYQLVRARH.

In terms of assembly, dimer of heterotrimers each composed of an alpha, a beta and a gamma chain. Alpha and beta are catalytic chains; gamma chains are involved in binding the enzyme complex to the cytoplasmic membrane. Heme is required as a cofactor.

It localises to the cell inner membrane. The enzyme catalyses nitrate + a quinol = a quinone + nitrite + H2O. Functionally, the nitrate reductase enzyme complex allows E.coli to use nitrate as an electron acceptor during anaerobic growth. The gamma chain is a membrane-embedded heme-iron unit resembling cytochrome b, which transfers electrons from quinones to the beta subunit. The chain is Respiratory nitrate reductase 1 gamma chain (narI) from Escherichia coli (strain K12).